The primary structure comprises 160 residues: S-ribosylhomocysteine lyase (160 aa).

3 residues coordinate Fe cation: H57, H61, and C127.

This sequence belongs to the LuxS family. In terms of assembly, homodimer. Fe cation serves as cofactor.

It carries out the reaction S-(5-deoxy-D-ribos-5-yl)-L-homocysteine = (S)-4,5-dihydroxypentane-2,3-dione + L-homocysteine. In terms of biological role, involved in the synthesis of autoinducer 2 (AI-2) which is secreted by bacteria and is used to communicate both the cell density and the metabolic potential of the environment. The regulation of gene expression in response to changes in cell density is called quorum sensing. Catalyzes the transformation of S-ribosylhomocysteine (RHC) to homocysteine (HC) and 4,5-dihydroxy-2,3-pentadione (DPD). The polypeptide is S-ribosylhomocysteine lyase (Streptococcus gordonii (strain Challis / ATCC 35105 / BCRC 15272 / CH1 / DL1 / V288)).